The sequence spans 398 residues: G2/mitotic-specific cyclin-B2 (398 aa).

Disordered stretches follow at residues Met1 to Ser26 and Ala53 to Ala76. Thr8 carries the post-translational modification Phosphothreonine. The segment covering Thr8–Lys23 has biased composition (polar residues). Residues Asn55 to Asn69 show a composition bias toward low complexity. A phosphoserine mark is found at Ser77 and Ser92. Thr94 carries the phosphothreonine modification. Phosphoserine is present on residues Ser99, Ser392, and Ser398.

It belongs to the cyclin family. Cyclin AB subfamily. In terms of assembly, interacts with the CDK1 protein kinase to form a serine/threonine kinase holoenzyme complex also known as maturation promoting factor (MPF). The cyclin subunit imparts substrate specificity to the complex.

In terms of biological role, essential for the control of the cell cycle at the G2/M (mitosis) transition. The sequence is that of G2/mitotic-specific cyclin-B2 (CCNB2) from Bos taurus (Bovine).